A 240-amino-acid chain; its full sequence is Phosphoribosylaminoimidazole-succinocarboxamide synthase (240 aa).

Belongs to the SAICAR synthetase family.

It carries out the reaction 5-amino-1-(5-phospho-D-ribosyl)imidazole-4-carboxylate + L-aspartate + ATP = (2S)-2-[5-amino-1-(5-phospho-beta-D-ribosyl)imidazole-4-carboxamido]succinate + ADP + phosphate + 2 H(+). It participates in purine metabolism; IMP biosynthesis via de novo pathway; 5-amino-1-(5-phospho-D-ribosyl)imidazole-4-carboxamide from 5-amino-1-(5-phospho-D-ribosyl)imidazole-4-carboxylate: step 1/2. The polypeptide is Phosphoribosylaminoimidazole-succinocarboxamide synthase (Wolbachia pipientis subsp. Culex pipiens (strain wPip)).